The primary structure comprises 271 residues: 3-methyl-2-oxobutanoate hydroxymethyltransferase (271 aa).

Mg(2+)-binding residues include Asp-42 and Asp-86. 3-methyl-2-oxobutanoate is bound by residues 42-43 (DS), Asp-86, and Lys-116. Residue Glu-118 participates in Mg(2+) binding. Residue Glu-185 is the Proton acceptor of the active site.

This sequence belongs to the PanB family. As to quaternary structure, homodecamer; pentamer of dimers. It depends on Mg(2+) as a cofactor.

It is found in the cytoplasm. It catalyses the reaction 3-methyl-2-oxobutanoate + (6R)-5,10-methylene-5,6,7,8-tetrahydrofolate + H2O = 2-dehydropantoate + (6S)-5,6,7,8-tetrahydrofolate. The protein operates within cofactor biosynthesis; (R)-pantothenate biosynthesis; (R)-pantoate from 3-methyl-2-oxobutanoate: step 1/2. Functionally, catalyzes the reversible reaction in which hydroxymethyl group from 5,10-methylenetetrahydrofolate is transferred onto alpha-ketoisovalerate to form ketopantoate. This chain is 3-methyl-2-oxobutanoate hydroxymethyltransferase, found in Synechococcus sp. (strain CC9605).